We begin with the raw amino-acid sequence, 401 residues long: Heparan-sulfate 6-O-sulfotransferase 1 (401 aa).

The Cytoplasmic segment spans residues 1–4 (MVER). The helical; Signal-anchor for type II membrane protein transmembrane segment at 5–27 (ASKFVLVVAGSACFMLILYQYAG) threads the bilayer. Residues 28 to 401 (PGLSLGAPGG…DYMSHIIEKW (374 aa)) are Lumenal-facing. A 3'-phosphoadenylyl sulfate-binding site is contributed by 83-91 (HIQKTGGTT). Residues 113–114 (KK), arginine 130, tryptophan 135, and histidine 140 contribute to the substrate site. Histidine 140 (proton acceptor) is an active-site residue. Residues arginine 175 and serine 183 each contribute to the 3'-phosphoadenylyl sulfate site. 2 residues coordinate substrate: histidine 187 and tryptophan 194. A glycan (N-linked (GlcNAc...) asparagine) is linked at asparagine 254. 307–309 (MQY) is a binding site for 3'-phosphoadenylyl sulfate. A glycan (N-linked (GlcNAc...) asparagine) is linked at asparagine 310. 313–314 (RA) serves as a coordination point for 3'-phosphoadenylyl sulfate. Residues 367–389 (ERLLHRSKEALPREDTEEPGRVP) form a disordered region.

It belongs to the sulfotransferase 6 family. In terms of processing, N-glycosylated.

The protein resides in the membrane. The catalysed reaction is alpha-D-glucosaminyl-[heparan sulfate](n) + 3'-phosphoadenylyl sulfate = 6-sulfo-alpha-D-glucosaminyl-[heparan sulfate](n) + adenosine 3',5'-bisphosphate + H(+). With respect to regulation, inhibited by dithiothreitol and stimulated by protamine. 6-O-sulfation enzyme which catalyzes the transfer of sulfate from 3'-phosphoadenosine 5'-phosphosulfate (PAPS) to position 6 of the N-sulfoglucosamine residue (GlcNS) of heparan sulfate. Also transfers sulfate to CDSNS-heparin and performs the crucial step modification in the biosynthesis of anticoagulant heparan sulfate (HSact). Critical for normal neuronal development where it may play a role in neuron branching. May also play a role in limb development. May prefer iduronic acid. This chain is Heparan-sulfate 6-O-sulfotransferase 1, found in Cricetulus griseus (Chinese hamster).